The chain runs to 226 residues: UPF0319 protein YpAngola_A3206 (226 aa).

The signal sequence occupies residues 1 to 20; sequence MKLGLVAGMLAVCFSFSSVA.

The protein belongs to the UPF0319 family.

The sequence is that of UPF0319 protein YpAngola_A3206 from Yersinia pestis bv. Antiqua (strain Angola).